The primary structure comprises 376 residues: Erythronate-4-phosphate dehydrogenase (376 aa).

Substrate is bound by residues Ser45 and Thr67. Asp147 lines the NAD(+) pocket. Arg209 is an active-site residue. Asp233 is an NAD(+) binding site. Residue Glu238 is part of the active site. His255 functions as the Proton donor in the catalytic mechanism. Gly258 lines the NAD(+) pocket. Tyr259 provides a ligand contact to substrate.

It belongs to the D-isomer specific 2-hydroxyacid dehydrogenase family. PdxB subfamily. Homodimer.

Its subcellular location is the cytoplasm. It catalyses the reaction 4-phospho-D-erythronate + NAD(+) = (R)-3-hydroxy-2-oxo-4-phosphooxybutanoate + NADH + H(+). Its pathway is cofactor biosynthesis; pyridoxine 5'-phosphate biosynthesis; pyridoxine 5'-phosphate from D-erythrose 4-phosphate: step 2/5. Functionally, catalyzes the oxidation of erythronate-4-phosphate to 3-hydroxy-2-oxo-4-phosphonooxybutanoate. The sequence is that of Erythronate-4-phosphate dehydrogenase from Shewanella baltica (strain OS185).